Here is a 115-residue protein sequence, read N- to C-terminus: Class I hydrophobin 21 (115 aa).

A signal peptide spans 1-20 (MFAAPATMLVLAALAALSSA). 4 disulfide bridges follow: Cys30–Cys93, Cys37–Cys87, Cys38–Cys77, and Cys94–Cys107.

Belongs to the fungal hydrophobin family. In terms of assembly, self-assembles to form functional amyloid fibrils called rodlets. Self-assembly into fibrillar rodlets occurs spontaneously at hydrophobic:hydrophilic interfaces and the rodlets further associate laterally to form amphipathic monolayers.

The protein resides in the secreted. The protein localises to the cell wall. Its function is as follows. Aerial growth, conidiation, and dispersal of filamentous fungi in the environment rely upon a capability of their secreting small amphipathic proteins called hydrophobins (HPBs) with low sequence identity. Class I can self-assemble into an outermost layer of rodlet bundles on aerial cell surfaces, conferring cellular hydrophobicity that supports fungal growth, development and dispersal; whereas Class II form highly ordered films at water-air interfaces through intermolecular interactions but contribute nothing to the rodlet structure. The protein is Class I hydrophobin 21 of Pleurotus ostreatus (strain PC15) (Oyster mushroom).